Reading from the N-terminus, the 260-residue chain is Coiled-coil domain-containing protein 172 (260 aa).

Residues 13–194 (SEHQAEESRR…FEDKKHEAIC (182 aa)) adopt a coiled-coil conformation.

It belongs to the CCDC172 family. May interact with TEKT2.

The protein resides in the cytoplasm. It is found in the cell projection. The protein localises to the cilium. The polypeptide is Coiled-coil domain-containing protein 172 (CCDC172) (Bos taurus (Bovine)).